The following is a 237-amino-acid chain: Bax inhibitor 1 (237 aa).

At 1-29 (MNIFDRKINFDALLKFSHITPSTQQHLKK) the chain is on the cytoplasmic side. Lys7 is covalently cross-linked (Glycyl lysine isopeptide (Lys-Gly) (interchain with G-Cter in ubiquitin)). Residues 30–50 (VYASFALCMFVAAAGAYVHVV) traverse the membrane as a helical segment. Residues 51-52 (TH) are Lumenal-facing. A helical transmembrane segment spans residues 53–73 (FIQAGLLSALGSLALMIWLMA). Residues 74–86 (TPHSHETEQKRLG) lie on the Cytoplasmic side of the membrane. A helical membrane pass occupies residues 87-107 (LLAGFAFLTGVGLGPALELCI). The Lumenal portion of the chain corresponds to 108 to 112 (AVNPS). Residues 113 to 133 (ILPTAFMGTAMIFTCFSLSAL) form a helical membrane-spanning segment. Residues 134–139 (YARRRS) lie on the Cytoplasmic side of the membrane. The helical transmembrane segment at 140–160 (YLFLGGILMSAMSLMLLSSLG) threads the bilayer. The Lumenal portion of the chain corresponds to 161–166 (NLFFGS). Residues 167–187 (IWLFQANLYLGLLVMCGFVLF) form a helical membrane-spanning segment. The Cytoplasmic portion of the chain corresponds to 188 to 206 (DTQLIIEKAEHGDKDYIWH). Residues 207–227 (CVDLFLDFVTLFRKLMLILAF) constitute an intramembrane region (helical). At 228–237 (NEKDKKKEKK) the chain is on the cytoplasmic side.

The protein belongs to the BI1 family. In terms of assembly, interacts with BCL2. Interacts with BCL2L1. Interacts with ERN1. Post-translationally, ubiquitinated by BFAR, leading to proteasomal degradation. In terms of tissue distribution, highly abundant in adult testis.

Its subcellular location is the endoplasmic reticulum membrane. Functionally, endoplasmic reticulum (ER)-resident protein that confers cellular protection as an anti-apoptotic protein by limiting multiple stress-inducing pathways surrounding the endoplasmic reticulum and mitochondria. Inhibits the activities of the key sensor for the endoplasmic reticulum unfolded protein response IRE1alpha/ERN1 both directly and by blocking BAX/BAK binding. Modulates ER calcium homeostasis by acting as a calcium-leak channel. Negatively regulates autophagy and autophagosome formation, especially during periods of nutrient deprivation, and reduces cell survival during starvation. This is Bax inhibitor 1 (Tmbim6) from Mus musculus (Mouse).